Reading from the N-terminus, the 314-residue chain is GMP synthase [glutamine-hydrolyzing] subunit B (314 aa).

A GMPS ATP-PPase domain is found at 2–186 (FDPKKFVEEA…LGIPDEIVER (185 aa)). 29–35 (SGGVDST) is an ATP binding site.

In terms of assembly, heterodimer composed of a glutamine amidotransferase subunit (A) and a GMP-binding subunit (B).

It carries out the reaction XMP + L-glutamine + ATP + H2O = GMP + L-glutamate + AMP + diphosphate + 2 H(+). The protein operates within purine metabolism; GMP biosynthesis; GMP from XMP (L-Gln route): step 1/1. In terms of biological role, catalyzes the synthesis of GMP from XMP. The polypeptide is GMP synthase [glutamine-hydrolyzing] subunit B (guaAB) (Methanopyrus kandleri (strain AV19 / DSM 6324 / JCM 9639 / NBRC 100938)).